A 76-amino-acid polypeptide reads, in one-letter code: Centromere protein W (76 aa).

This sequence belongs to the CENP-W/WIP1 family. In terms of assembly, heterodimer with CENPT; this dimer coassembles with CENPS-CENPX heterodimers at centromeres to form the tetrameric CENP-T-W-S-X complex, which is a subcomplex of the large constitutive centromere-associated network (CCAN, also known as the interphase centromere complex or ICEN). Interacts with NPM1.

The protein localises to the nucleus. Its subcellular location is the chromosome. The protein resides in the centromere. It localises to the kinetochore. Component of the CENPA-NAC (nucleosome-associated) complex, a complex that plays a central role in assembly of kinetochore proteins, mitotic progression and chromosome segregation. The CENPA-NAC complex recruits the CENPA-CAD (nucleosome distal) complex and may be involved in incorporation of newly synthesized CENPA into centromeres. Part of a nucleosome-associated complex that binds specifically to histone H3-containing nucleosomes at the centromere, as opposed to nucleosomes containing CENPA. Component of the heterotetrameric CENP-T-W-S-X complex that binds and supercoils DNA, and plays an important role in kinetochore assembly. CENPW has a fundamental role in kinetochore assembly and function. It is one of the inner kinetochore proteins, with most further proteins binding downstream. Required for normal chromosome organization and normal progress through mitosis. The polypeptide is Centromere protein W (CENPW) (Gallus gallus (Chicken)).